A 507-amino-acid polypeptide reads, in one-letter code: Probable cytosol aminopeptidase (507 aa).

The Mn(2+) site is built by K271 and D276. The active site involves K283. Mn(2+) contacts are provided by D294, D353, and E355. The active site involves R357.

This sequence belongs to the peptidase M17 family. It depends on Mn(2+) as a cofactor.

The protein resides in the cytoplasm. The enzyme catalyses Release of an N-terminal amino acid, Xaa-|-Yaa-, in which Xaa is preferably Leu, but may be other amino acids including Pro although not Arg or Lys, and Yaa may be Pro. Amino acid amides and methyl esters are also readily hydrolyzed, but rates on arylamides are exceedingly low.. It catalyses the reaction Release of an N-terminal amino acid, preferentially leucine, but not glutamic or aspartic acids.. Presumably involved in the processing and regular turnover of intracellular proteins. Catalyzes the removal of unsubstituted N-terminal amino acids from various peptides. This chain is Probable cytosol aminopeptidase, found in Nitratidesulfovibrio vulgaris (strain ATCC 29579 / DSM 644 / CCUG 34227 / NCIMB 8303 / VKM B-1760 / Hildenborough) (Desulfovibrio vulgaris).